The sequence spans 64 residues: Insect toxin OsI1 (64 aa).

The LCN-type CS-alpha/beta domain occupies 1 to 61 (DGYPKQKDGC…MWKYETNTCG (61 aa)). Cystine bridges form between Cys10-Cys60, Cys14-Cys35, Cys21-Cys42, and Cys25-Cys44. Residue Gly61 is modified to Glycine amide.

It belongs to the long (4 C-C) scorpion toxin superfamily. Sodium channel inhibitor family. Beta subfamily. In terms of tissue distribution, expressed by the venom gland.

It localises to the secreted. Functionally, depressant insect beta-toxins cause a transient contraction paralysis followed by a slow flaccid paralysis. They bind voltage-independently at site-4 of sodium channels (Nav) and shift the voltage of activation toward more negative potentials thereby affecting sodium channel activation and promoting spontaneous and repetitive firing. This toxin is active only on insects. The sequence is that of Insect toxin OsI1 from Orthochirus scrobiculosus (Central Asian scorpion).